A 315-amino-acid polypeptide reads, in one-letter code: Ribose-phosphate pyrophosphokinase (315 aa).

Residues Asp-40–Glu-42 and Arg-99–Gln-100 contribute to the ATP site. Positions 133 and 175 each coordinate Mg(2+). Residue Lys-198 is part of the active site. Residues Arg-200, Asp-224, and Asp-228–Ser-232 each bind D-ribose 5-phosphate.

It belongs to the ribose-phosphate pyrophosphokinase family. Class I subfamily. Homohexamer. Mg(2+) serves as cofactor.

It localises to the cytoplasm. The catalysed reaction is D-ribose 5-phosphate + ATP = 5-phospho-alpha-D-ribose 1-diphosphate + AMP + H(+). The protein operates within metabolic intermediate biosynthesis; 5-phospho-alpha-D-ribose 1-diphosphate biosynthesis; 5-phospho-alpha-D-ribose 1-diphosphate from D-ribose 5-phosphate (route I): step 1/1. Involved in the biosynthesis of the central metabolite phospho-alpha-D-ribosyl-1-pyrophosphate (PRPP) via the transfer of pyrophosphoryl group from ATP to 1-hydroxyl of ribose-5-phosphate (Rib-5-P). In Thermotoga maritima (strain ATCC 43589 / DSM 3109 / JCM 10099 / NBRC 100826 / MSB8), this protein is Ribose-phosphate pyrophosphokinase.